Reading from the N-terminus, the 320-residue chain is Ferrochelatase (320 aa).

Histidine 194 and glutamate 275 together coordinate Fe cation.

Belongs to the ferrochelatase family. Monomer.

The protein resides in the cytoplasm. The catalysed reaction is heme b + 2 H(+) = protoporphyrin IX + Fe(2+). It participates in porphyrin-containing compound metabolism; protoheme biosynthesis; protoheme from protoporphyrin-IX: step 1/1. Its function is as follows. Catalyzes the ferrous insertion into protoporphyrin IX. In Escherichia coli (strain K12 / MC4100 / BW2952), this protein is Ferrochelatase.